The following is a 622-amino-acid chain: Probable methionine--tRNA ligase, mitochondrial (622 aa).

The 'HIGH' region motif lies at 67-79 (PIFYVNASPHVGH). Positions 366-370 (KMSKS) match the 'KMSKS' region motif. Lysine 369 provides a ligand contact to ATP. A disordered region spans residues 592–622 (LDDIKGMGPDAGSKKHSSGNKPSSGNKKPTA). The span at 610–622 (GNKPSSGNKKPTA) shows a compositional bias: low complexity.

The protein belongs to the class-I aminoacyl-tRNA synthetase family.

The protein localises to the mitochondrion matrix. It carries out the reaction tRNA(Met) + L-methionine + ATP = L-methionyl-tRNA(Met) + AMP + diphosphate. The sequence is that of Probable methionine--tRNA ligase, mitochondrial from Neurospora crassa (strain ATCC 24698 / 74-OR23-1A / CBS 708.71 / DSM 1257 / FGSC 987).